The chain runs to 206 residues: Nucleoside triphosphate pyrophosphatase (206 aa).

Asp78 serves as the catalytic Proton acceptor.

This sequence belongs to the Maf family. Requires a divalent metal cation as cofactor.

It is found in the cytoplasm. The enzyme catalyses a ribonucleoside 5'-triphosphate + H2O = a ribonucleoside 5'-phosphate + diphosphate + H(+). It carries out the reaction a 2'-deoxyribonucleoside 5'-triphosphate + H2O = a 2'-deoxyribonucleoside 5'-phosphate + diphosphate + H(+). Nucleoside triphosphate pyrophosphatase. May have a dual role in cell division arrest and in preventing the incorporation of modified nucleotides into cellular nucleic acids. The polypeptide is Nucleoside triphosphate pyrophosphatase (Prochlorococcus marinus (strain MIT 9312)).